The chain runs to 313 residues: Serine/threonine-protein kinase SZE1 (313 aa).

Glycine 2 carries the N-myristoyl glycine lipid modification. A Protein kinase domain is found at 43–311 (MELGESLGYI…EVLDNLNAIA (269 aa)). Residues 49 to 57 (LGYINPKTL) and lysine 71 contribute to the ATP site.

The protein belongs to the protein kinase superfamily. Ser/Thr protein kinase family. As to quaternary structure, component of an immune signaling complex made of, at least, SZE1, BKN2/SZE2, ZAR1 and ZED1. Interacts directly with ZED1, ZAR1 and Pseudomonas syringae HOPZ1A at the plasma membrane. In terms of processing, N-terminal myristoylation is critical for plasma membrane localization and implication in defense responses. Post-translationally, autophosphorylated. As to expression, expressed in roots, seedlings, rosette leaves, floral organs, siliques and inflorescence stems.

It localises to the cell membrane. It carries out the reaction L-seryl-[protein] + ATP = O-phospho-L-seryl-[protein] + ADP + H(+). The enzyme catalyses L-threonyl-[protein] + ATP = O-phospho-L-threonyl-[protein] + ADP + H(+). Functionally, together with BKN2/SZE2 and ZED1, required for effector-triggered immunity (e.g. Pseudomonas syringae effector type III HopZ1a) via the activation of ZAR1, thus being essential for resistance against P.syringae pv. tomato DC3000 expressing HopZ1a. This Arabidopsis thaliana (Mouse-ear cress) protein is Serine/threonine-protein kinase SZE1.